Here is an 87-residue protein sequence, read N- to C-terminus: Defensin-A (87 aa).

Residues 1 to 19 (MKFYLVLAFLTLCAVAVTA) form the signal peptide. Residues 20–44 (LPAGDETRIDLETLEEDLRLVDGAQ) constitute a propeptide that is removed on maturation. 3 disulfides stabilise this stretch: Cys-57/Cys-78, Cys-64/Cys-83, and Cys-68/Cys-85.

As to expression, hemolymph and fat body.

The protein resides in the secreted. Antibacterial peptide mostly active against Gram-positive and Gram negative bacteria. This chain is Defensin-A, found in Glossina morsitans morsitans (Savannah tsetse fly).